We begin with the raw amino-acid sequence, 105 residues long: N(4)-acetylcytidine amidohydrolase (105 aa).

Residues 8 to 93 (TFFEFLTPLV…ALIQEIYPNI (86 aa)) form the ASCH domain. Lys-22 acts as the Proton acceptor in catalysis. Thr-25 acts as the Nucleophile in catalysis. Glu-75 functions as the Proton donor in the catalytic mechanism.

This sequence belongs to the N(4)-acetylcytidine amidohydrolase family.

The enzyme catalyses N(4)-acetylcytidine + H2O = cytidine + acetate + H(+). It catalyses the reaction N(4)-acetyl-2'-deoxycytidine + H2O = 2'-deoxycytidine + acetate + H(+). The catalysed reaction is N(4)-acetylcytosine + H2O = cytosine + acetate + H(+). In terms of biological role, catalyzes the hydrolysis of N(4)-acetylcytidine (ac4C). This Vibrio cholerae serotype O1 (strain ATCC 39315 / El Tor Inaba N16961) protein is N(4)-acetylcytidine amidohydrolase.